Reading from the N-terminus, the 569-residue chain is Hexose transporter HXT8 (569 aa).

The segment at 1–38 (MTDRKTNLPEEPIFEEAEDDGCPSIENSSHLSVPTVEE) is disordered. The Cytoplasmic portion of the chain corresponds to 1–61 (MTDRKTNLPE…EVVVPEKPAS (61 aa)). The segment covering 12–21 (PIFEEAEDDG) has biased composition (acidic residues). The chain crosses the membrane as a helical span at residues 62–82 (AYATVSIMCLCMAFGGFMSGW). Over 83–118 (DTGTISGFVNQTDFLRRFGNYSHSKNTYYLSNVRTG) the chain is Extracellular. 2 N-linked (GlcNAc...) asparagine glycosylation sites follow: Asn-92 and Asn-102. A helical membrane pass occupies residues 119 to 139 (LIVSIFNVGSAIGCLFLSKLG). The Cytoplasmic portion of the chain corresponds to 140–145 (DIYGRC). The helical transmembrane segment at 146-166 (MGLIIVIVVYMVGIVIQIASI) threads the bilayer. The Extracellular segment spans residues 167-176 (DKWYQYFIGR). The chain crosses the membrane as a helical span at residues 177–197 (IIAGIGAGSISVLAPMLISET). At 198–203 (APKHIR) the chain is on the cytoplasmic side. A helical transmembrane segment spans residues 204-224 (GTLLACWQLMVTFAIFLGYCT). Over 225–238 (NYGTKTYSNSVQWR) the chain is Extracellular. Residues 239-259 (VPLGLCFAWAIIMIGGMTFVP) traverse the membrane as a helical segment. The Cytoplasmic portion of the chain corresponds to 260 to 342 (ESPRFLVQVG…INSLQQLTGD (83 aa)). Residues 343 to 359 (NYFFYYGTTIFKSVGMN) form a helical membrane-spanning segment. Over 360-365 (DSFETS) the chain is Extracellular. Residues 366 to 383 (IVLGIVNFASCFFSLYSV) traverse the membrane as a helical segment. Topologically, residues 384–390 (DKLGRRR) are cytoplasmic. A helical transmembrane segment spans residues 391–411 (CLLLGAATMTACMVIYASVGV). Over 412-433 (TRLYPNGKSEPSSKGAGNCTIV) the chain is Extracellular. N-linked (GlcNAc...) asparagine glycosylation occurs at Asn-429. A helical transmembrane segment spans residues 434 to 454 (FTCFYIFCFSCTWGPVCYVII). The Cytoplasmic segment spans residues 455-471 (SETFPLRVRSKCMSVAT). A helical transmembrane segment spans residues 472–492 (AANLLWGFLIGFFTPFITSAI). Residue Asn-493 is a topological domain, extracellular. Residues 494–514 (FYYGYVFMGCLAFSYFYVFFF) form a helical membrane-spanning segment. At 515–569 (VPETKGLTLEEVDEMWMDGVLPWKSESWVPASRRDGDYDNEKLQHDEKPFYKRMF) the chain is on the cytoplasmic side.

The protein belongs to the major facilitator superfamily. Sugar transporter (TC 2.A.1.1) family.

It is found in the membrane. In terms of biological role, probable glucose transporter. This Saccharomyces cerevisiae (strain ATCC 204508 / S288c) (Baker's yeast) protein is Hexose transporter HXT8 (HXT8).